The following is a 131-amino-acid chain: Cruxhalorhodopsin-1 (131 aa).

A helical membrane pass occupies residues 1-11 (PMILLALGLLA). Topologically, residues 12-14 (DTD) are cytoplasmic. Residues 15-38 (IASLFTAITMDIGMCVTGLAAALI) form a helical membrane-spanning segment. Topologically, residues 39 to 41 (TSS) are extracellular. The helical transmembrane segment at 42–64 (HLLRWVFYGISCAFFVAVLYVLL) threads the bilayer. The Cytoplasmic portion of the chain corresponds to 65 to 76 (VQWPADAEAAGT). The chain crosses the membrane as a helical span at residues 77–100 (SEIFGTLKILTVVLWLGYPILWAL). The Extracellular portion of the chain corresponds to 101–109 (GSEGVALLS). Residues 110-131 (VGVTSWGYSGLDILAKYVFAFI) form a helical membrane-spanning segment. At K125 the chain carries N6-(retinylidene)lysine.

It belongs to the archaeal/bacterial/fungal opsin family.

The protein localises to the cell membrane. Light-driven chloride pump. The protein is Cruxhalorhodopsin-1 (choP1) of Haloarcula argentinensis.